The primary structure comprises 661 residues: Transcription factor ccg-8 (661 aa).

Basic residues predominate over residues 1–11 (MEHHHHHRHMH). Disordered regions lie at residues 1-69 (MEHH…QADN), 107-243 (SASS…LDDP), 255-279 (LKTD…DQNQ), and 354-398 (RTKS…RRTS). Composition is skewed to low complexity over residues 23–43 (HQQY…QHQQ) and 107–140 (SASS…SSNR). Over residues 173–187 (DHSLPSIASLNVGSS) the composition is skewed to polar residues. Pro residues predominate over residues 192-203 (QPTPTPQPPPKF). Residues 357-366 (SSSDTRESGQ) are compositionally biased toward basic and acidic residues.

In terms of biological role, transcription factor that plays a pivotal role in azole adaptive responses by regulating the drug accumulation in the cells. Affects the transcriptional responses to ketoconazole of many genes, including the target gene (erg11), an azole transporter gene (cdr4), a hexose transporter gene (hxt13), a stress response gene (kts-1), two transcription factor genes (named kts-2 and fsd-1/ndt80). Also regulates phospholipid synthesis that is not involved in azole resistance. This chain is Transcription factor ccg-8, found in Neurospora crassa (strain ATCC 24698 / 74-OR23-1A / CBS 708.71 / DSM 1257 / FGSC 987).